We begin with the raw amino-acid sequence, 367 residues long: Outer membrane porin C (367 aa).

The signal sequence occupies residues 1–21; it reads MKVKVLSLLVPALLVAGAANA. At 22–33 the chain is on the periplasmic side; the sequence is AEVYNKDGNKLD. The chain crosses the membrane as a beta stranded span at residues 34-42; it reads LYGKVDGLH. The Extracellular portion of the chain corresponds to 43-53; sequence YFSDNKDVDGD. A beta stranded transmembrane segment spans residues 54–63; that stretch reads QTYMRLGFKG. Residues 64-73 lie on the Periplasmic side of the membrane; the sequence is ETQVTDQLTG. A beta stranded membrane pass occupies residues 74-84; sequence YGQWEYQIQGN. The Extracellular portion of the chain corresponds to 85–91; the sequence is SAENENN. A beta stranded transmembrane segment spans residues 92–101; sequence SWTRVAFAGL. Residues 102 to 106 are Periplasmic-facing; sequence KFQDV. The chain crosses the membrane as a beta stranded span at residues 107–115; the sequence is GSFDYGRNY. A loop L3; may constrict the pore region spans residues 116-133; that stretch reads GVVYDVTSWTDVLPEFGG. Residues 116-141 lie on the Extracellular side of the membrane; sequence GVVYDVTSWTDVLPEFGGDTYGSDNF. The beta stranded transmembrane segment at 142–154 threads the bilayer; sequence MQQRGNGFATYRN. The Periplasmic portion of the chain corresponds to 155–163; the sequence is TDFFGLVDG. Residues 164-171 form a beta stranded membrane-spanning segment; that stretch reads LNFAVQYQ. The Extracellular portion of the chain corresponds to 172-200; sequence GKNGNPSGEGFTSGVTNNGRDALRQNGDG. A beta stranded membrane pass occupies residues 201–207; sequence VGGSITY. At 208–211 the chain is on the periplasmic side; sequence DYEG. The beta stranded transmembrane segment at 212-219 threads the bilayer; that stretch reads FGIGGAIS. The Extracellular segment spans residues 220–241; sequence SSKRTDAQNTAAYIGNGDRAET. The beta stranded transmembrane segment at 242–248 threads the bilayer; sequence YTGGLKY. Over 249-252 the chain is Periplasmic; the sequence is DANN. The beta stranded transmembrane segment at 253–260 threads the bilayer; sequence IYLAAQYT. Over 261–269 the chain is Extracellular; the sequence is QTYNATRVG. A beta stranded membrane pass occupies residues 270–286; sequence SLGWANKAQNFEAVAQY. Residues 287 to 291 lie on the Periplasmic side of the membrane; it reads QFDFG. The chain crosses the membrane as a beta stranded span at residues 292–299; the sequence is LRPSLAYL. Residues 300–318 lie on the Extracellular side of the membrane; it reads QSKGKNLGRGYDDEDILKY. A beta stranded transmembrane segment spans residues 319–326; it reads VDVGATYY. The Periplasmic portion of the chain corresponds to 327–330; it reads FNKN. Residues 331–338 traverse the membrane as a beta stranded segment; that stretch reads MSTYVDYK. Residues 339-358 are Extracellular-facing; that stretch reads INLLDDNQFTRDAGINTDNI. Residues Asn-340, Leu-342, and Thr-355 each coordinate Mg(2+). Residues 359 to 366 form a beta stranded membrane-spanning segment; that stretch reads VALGLVYQ. A topological domain (periplasmic) is located at residue Phe-367.

This sequence belongs to the Gram-negative porin family. Homotrimer. Forms mixed heterotrimers with OmpF and with PhoE; other mixed heterotrimers are also probable.

The protein resides in the cell outer membrane. Its function is as follows. Forms pores that allow passive diffusion of small molecules across the outer membrane. (Microbial infection) Supports colicin E5 entry in the absence of its major receptor OmpF. In terms of biological role, (Microbial infection) A mixed OmpC-OmpF heterotrimer is the outer membrane receptor for toxin CdiA-EC536; polymorphisms in extracellular loops 4 and 5 of OmpC confer susceptibility to CdiA-EC536-mediated toxicity. The sequence is that of Outer membrane porin C (ompC) from Escherichia coli (strain K12).